The sequence spans 224 residues: Putative homeobox protein R749 (224 aa).

Residues 139 to 162 (KTKTIKKSTSEKKTSPKKKTTSQQ) are disordered. The homeobox DNA-binding region spans 161 to 220 (QQIKRVRLSDEERNILESQYSKNNFPSPEIRDELAKKIGKTPRQVQIWFQNKRCKDRKNL).

Its subcellular location is the host nucleus. This chain is Putative homeobox protein R749, found in Acanthamoeba polyphaga mimivirus (APMV).